The primary structure comprises 944 residues: Ras guanine nucleotide exchange factor O (944 aa).

The RING-type zinc-finger motif lies at 16–54 (CGICQNLFKDPNTLIPCGHAFCLDCLTTNASIKNCIQCK). Positions 80 to 102 (NNSNNNSNGENTNNNNNIINNER) are disordered. A B box-type zinc finger spans residues 152–192 (NNIRYCMEHYEHYYAFCNDCQAPVCPSCLLTTHNRHGMIPL). Residues cysteine 157, histidine 160, cysteine 179, and histidine 184 each contribute to the Zn(2+) site. 2 coiled-coil regions span residues 200–234 (KMKE…LLDS) and 271–303 (ASHM…KFKD). An N-terminal Ras-GEF domain is found at 402–528 (EEFEVKYGSL…LLLNSNENSP (127 aa)). 3 disordered regions span residues 530–562 (ITSS…LQPT), 587–623 (TNNG…SSPS), and 644–670 (ESPL…FGAS). Residues 590 to 604 (GTCKIQNSPPKNYQQ) show a composition bias toward polar residues. Composition is skewed to low complexity over residues 605–623 (SNYS…SSPS) and 648–670 (NSPR…FGAS). In terms of domain architecture, Ras-GEF spans 727 to 944 (DEFEIAKQLT…EYLNVHIDEL (218 aa)).

Functionally, promotes the exchange of Ras-bound GDP by GTP. The sequence is that of Ras guanine nucleotide exchange factor O (gefO) from Dictyostelium discoideum (Social amoeba).